The sequence spans 228 residues: uncharacterized protein (228 aa).

The interval 90-115 (TDESEESSSANNTTTTASHTLSNSKK) is disordered. The segment covering 96–113 (SSSANNTTTTASHTLSNS) has biased composition (low complexity).

Its subcellular location is the cytoplasm. The protein localises to the cell cortex. Deletion results in antifungal drug fluconazole-resistant phenotype. This is an uncharacterized protein from Saccharomyces cerevisiae (strain ATCC 204508 / S288c) (Baker's yeast).